A 387-amino-acid chain; its full sequence is MKALHFGAGNIGRGFIGKLLADAGAQLTFADVNQPLLDALNKRKRYQVNVVGEQARVEEVKNVSAVNSGSPEVVALIAEADIVTTAVGPQILARIAATVAQGLITRHQQGNTRPLNIIACENMVRGTSQLKQHVFAALSEDEQIWVEQHVGFVDSAVDRIVPPSEAGSTDILAVTVETFSEWIVDGTQFKGQPPEIVGMELTDNLMAFVERKLFTLNTGHAITAYLGQLAGHQTIRDAILDPAVRQTVKGAMEESGAVLIKRYAFDPQKHAAYINKILSRFENPYLHDDVERVGRQPLRKLSAGDRLIKPLLGTLEYQLPHDSLVTGIAAAMSYRSEQDPQAQELVTLLAQLGPKAALAQISGLPADSEVVEQAVSVYNAMQQKLAH.

3–14 (ALHFGAGNIGRG) lines the NAD(+) pocket.

Belongs to the mannitol dehydrogenase family.

It catalyses the reaction D-mannitol 1-phosphate + NAD(+) = beta-D-fructose 6-phosphate + NADH + H(+). The chain is Mannitol-1-phosphate 5-dehydrogenase from Yersinia pseudotuberculosis serotype O:3 (strain YPIII).